A 103-amino-acid polypeptide reads, in one-letter code: Large ribosomal subunit protein bL21 (103 aa).

This sequence belongs to the bacterial ribosomal protein bL21 family. As to quaternary structure, part of the 50S ribosomal subunit. Contacts protein L20.

In terms of biological role, this protein binds to 23S rRNA in the presence of protein L20. This Nautilia profundicola (strain ATCC BAA-1463 / DSM 18972 / AmH) protein is Large ribosomal subunit protein bL21.